Reading from the N-terminus, the 345-residue chain is Phosphate acyltransferase (345 aa).

Belongs to the PlsX family. As to quaternary structure, homodimer. Probably interacts with PlsY.

The protein resides in the cytoplasm. It carries out the reaction a fatty acyl-[ACP] + phosphate = an acyl phosphate + holo-[ACP]. The protein operates within lipid metabolism; phospholipid metabolism. Catalyzes the reversible formation of acyl-phosphate (acyl-PO(4)) from acyl-[acyl-carrier-protein] (acyl-ACP). This enzyme utilizes acyl-ACP as fatty acyl donor, but not acyl-CoA. The polypeptide is Phosphate acyltransferase (Levilactobacillus brevis (strain ATCC 367 / BCRC 12310 / CIP 105137 / JCM 1170 / LMG 11437 / NCIMB 947 / NCTC 947) (Lactobacillus brevis)).